The primary structure comprises 515 residues: Tripartite motif-containing protein 5 (515 aa).

The residue at position 2 (Ala2) is an N-acetylalanine. The RING-type zinc finger occupies 15–60 (CPICLELLTEPLSLPCGHSFCQACITANHKESMLYKEEERSCPVCR). Ser87 is subject to Phosphoserine. The B box-type zinc finger occupies 92–133 (QKVDHCARHGEKLLLFCQEDSKVICWLCERSQEHRGHHTFLM). Zn(2+) contacts are provided by Cys97, His100, Cys119, and His125. Residues 137–225 (AQEYHVKLQT…LTKSETEMVQ (89 aa)) adopt a coiled-coil conformation. Residues 187–200 (FEQLREILDWEESN) form a required for interaction with GABARAP and for autophagy region. Positions 283–515 (LKGMLDMFRE…VPMTLCSPSS (233 aa)) constitute a B30.2/SPRY domain.

It belongs to the TRIM/RBCC family. In terms of assembly, can form homodimers and homotrimers. In addition to lower-order dimerization, also exhibits a higher-order multimerization and both low- and high-order multimerizations are essential for its restriction activity. Interacts with BTBD1 and BTBD2. Interacts with PSMC4, PSMC5, PSMD7 and HSPA8/HSC70. Interacts (via B30.2/SPRY domain) with HSPA1A/B. Interacts with PSMC2, MAP3K7/TAK1, TAB2 and TAB3. Interacts with SQSTM1. Interacts with TRIM6 and TRIM34. Interacts with ULK1 (phosphorylated form), GABARAP, GABARAPL1, GABARAPL2, MAP1LC3A, MAP1LC3C and BECN1. Post-translationally, degraded in a proteasome-independent fashion in the absence of viral infection but in a proteasome-dependent fashion following exposure to restriction sensitive virus. Autoubiquitinated in a RING finger- and UBE2D2-dependent manner. Monoubiquitinated by TRIM21. Deubiquitinated by Yersinia YopJ. Ubiquitination may not lead to proteasomal degradation.

It localises to the cytoplasm. The protein localises to the nucleus. It catalyses the reaction S-ubiquitinyl-[E2 ubiquitin-conjugating enzyme]-L-cysteine + [acceptor protein]-L-lysine = [E2 ubiquitin-conjugating enzyme]-L-cysteine + N(6)-ubiquitinyl-[acceptor protein]-L-lysine.. The protein operates within protein modification; protein ubiquitination. Capsid-specific restriction factor that prevents infection from non-host-adapted retroviruses. Blocks viral replication early in the life cycle, after viral entry but before reverse transcription. In addition to acting as a capsid-specific restriction factor, also acts as a pattern recognition receptor that activates innate immune signaling in response to the retroviral capsid lattice. Binding to the viral capsid triggers its E3 ubiquitin ligase activity, and in concert with the heterodimeric ubiquitin conjugating enzyme complex UBE2V1-UBE2N (also known as UBC13-UEV1A complex) generates 'Lys-63'-linked polyubiquitin chains, which in turn are catalysts in the autophosphorylation of the MAP3K7/TAK1 complex (includes TAK1, TAB2, and TAB3). Activation of the MAP3K7/TAK1 complex by autophosphorylation results in the induction and expression of NF-kappa-B and MAPK-responsive inflammatory genes, thereby leading to an innate immune response in the infected cell. Restricts infection by human immunodeficiency virus type 1 (HIV-1), simian immunodeficiency virus (SIV-mac) and N-tropic murine leukemia viruse (N-MLV). Plays a role in regulating autophagy through activation of autophagy regulator BECN1 by causing its dissociation from its inhibitors BCL2 and TAB2. The sequence is that of Tripartite motif-containing protein 5 (TRIM5) from Chlorocebus tantalus (Tantalus monkey).